The sequence spans 249 residues: Diaminopimelate epimerase (249 aa).

Substrate contacts are provided by Asn11 and Asn60. Cys69 acts as the Proton donor in catalysis. Substrate contacts are provided by residues 70–71 (GN), Asn164, and 182–183 (ER). The active-site Proton acceptor is Cys192. 193 to 194 (GT) is a binding site for substrate.

This sequence belongs to the diaminopimelate epimerase family. Homodimer.

Its subcellular location is the cytoplasm. The enzyme catalyses (2S,6S)-2,6-diaminopimelate = meso-2,6-diaminopimelate. It functions in the pathway amino-acid biosynthesis; L-lysine biosynthesis via DAP pathway; DL-2,6-diaminopimelate from LL-2,6-diaminopimelate: step 1/1. Catalyzes the stereoinversion of LL-2,6-diaminopimelate (L,L-DAP) to meso-diaminopimelate (meso-DAP), a precursor of L-lysine and an essential component of the bacterial peptidoglycan. This Campylobacter lari (strain RM2100 / D67 / ATCC BAA-1060) protein is Diaminopimelate epimerase.